We begin with the raw amino-acid sequence, 455 residues long: RQC trigger complex subunit RQT4 homolog (455 aa).

2 disordered regions span residues 64-98 and 118-148; these read STHS…SHPS and PASR…GVMT. Composition is skewed to polar residues over residues 65-98 and 119-130; these read THSG…SHPS and ASRNKSQSNNIS. Ser-70 is modified (phosphoserine). Ser-380 is modified (phosphoserine).

Component of the RQT (ribosome quality control trigger) complex.

It is found in the cytoplasm. The protein localises to the cytosol. In terms of biological role, probably functions as part of the RQC trigger (RQT) complex that activates the ribosome quality control (RQC) pathway, a pathway that degrades nascent peptide chains during problematic translation. The protein is RQC trigger complex subunit RQT4 homolog of Schizosaccharomyces pombe (strain 972 / ATCC 24843) (Fission yeast).